The sequence spans 175 residues: Alpha-crystallin B chain (175 aa).

Residue Met1 is modified to N-acetylmethionine. A phosphoserine mark is found at Ser19, Ser45, and Ser59. The sHSP domain occupies 56–164 (RAPSWIDTGL…PERTIPITRE (109 aa)). His83 serves as a coordination point for Zn(2+). Lys92 is modified (N6-acetyllysine). Zn(2+)-binding residues include His104, Glu106, His111, and His119. The disordered stretch occupies residues 142-175 (VLTVNGPRKQASGPERTIPITREEKPAVTAAPKK). Position 166 is an N6-acetyllysine (Lys166). Thr170 carries O-linked (GlcNAc) threonine glycosylation.

It belongs to the small heat shock protein (HSP20) family. Heteromer composed of three CRYAA and one CRYAB subunits. Aggregates with homologous proteins, including the small heat shock protein HSPB1, to form large heteromeric complexes. Inter-subunit bridging via zinc ions enhances stability, which is crucial as there is no protein turn over in the lens. Interacts with HSPBAP1. Interacts with TTN/titin. Interacts with TMEM109; in the cellular response to DNA damage. Interacts with DES; binds rapidly during early stages of DES filament assembly and a reduced binding seen in the later stages. Interacts with TMED10; the interaction mediates the translocation from the cytoplasm into the ERGIC (endoplasmic reticulum-Golgi intermediate compartment) and thereby secretion. Interacts with ATP6V1A and with MTOR, forming a ternary complex. Lens as well as other tissues.

It localises to the cytoplasm. The protein resides in the nucleus. Its subcellular location is the secreted. It is found in the lysosome. Functionally, may contribute to the transparency and refractive index of the lens. Has chaperone-like activity, preventing aggregation of various proteins under a wide range of stress conditions. In lens epithelial cells, stabilizes the ATP6V1A protein, preventing its degradation by the proteasome. This is Alpha-crystallin B chain from Rattus norvegicus (Rat).